A 218-amino-acid polypeptide reads, in one-letter code: Ropporin-1-like protein (218 aa).

Residues 17-54 (PELPDILKQFTKAAIRTQPADVLQWSAGYFSALSRGDP) form the RIIa domain.

It belongs to the ropporin family. Component of the axonemal radial spoke complex 1 (RS1), at least composed of spoke head proteins RSPH1, RSPH3, RSPH9 and the cilia-specific component RSPH4A or sperm-specific component RSPH6A, spoke stalk proteins RSPH14, DNAJB13, DYDC1, ROPN1L and NME5, and the anchor protein IQUB. May interact with AKAP3. Interacts with FSCB; the interaction increases upon spermatozoa capacitation conditions. Interacts with CFAP61. Post-translationally, sumoylated, sumoylation decreases upon spermatozoa capacitation conditions. Testis-specific. Expression is restricted to germ cells.

The protein resides in the cell projection. It is found in the cilium. The protein localises to the flagellum. In terms of biological role, functions as part of axonemal radial spoke complexes that play an important part in the motility of sperm and cilia. Important for male fertility. With ROPN1, involved in fibrous sheath integrity and sperm motility, plays a role in PKA-dependent signaling processes required for spermatozoa capacitation. This Mus musculus (Mouse) protein is Ropporin-1-like protein (Ropn1l).